Here is a 421-residue protein sequence, read N- to C-terminus: Gamma-glutamyl phosphate reductase (421 aa).

It belongs to the gamma-glutamyl phosphate reductase family.

The protein resides in the cytoplasm. It carries out the reaction L-glutamate 5-semialdehyde + phosphate + NADP(+) = L-glutamyl 5-phosphate + NADPH + H(+). The protein operates within amino-acid biosynthesis; L-proline biosynthesis; L-glutamate 5-semialdehyde from L-glutamate: step 2/2. Functionally, catalyzes the NADPH-dependent reduction of L-glutamate 5-phosphate into L-glutamate 5-semialdehyde and phosphate. The product spontaneously undergoes cyclization to form 1-pyrroline-5-carboxylate. The protein is Gamma-glutamyl phosphate reductase of Brucella abortus (strain 2308).